A 507-amino-acid chain; its full sequence is ATP synthase subunit alpha (507 aa).

168-175 (GDRQTGKT) contributes to the ATP binding site.

This sequence belongs to the ATPase alpha/beta chains family. As to quaternary structure, F-type ATPases have 2 components, CF(1) - the catalytic core - and CF(0) - the membrane proton channel. CF(1) has five subunits: alpha(3), beta(3), gamma(1), delta(1), epsilon(1). CF(0) has three main subunits: a(1), b(2) and c(9-12). The alpha and beta chains form an alternating ring which encloses part of the gamma chain. CF(1) is attached to CF(0) by a central stalk formed by the gamma and epsilon chains, while a peripheral stalk is formed by the delta and b chains.

It localises to the cell membrane. The catalysed reaction is ATP + H2O + 4 H(+)(in) = ADP + phosphate + 5 H(+)(out). Functionally, produces ATP from ADP in the presence of a proton gradient across the membrane. The alpha chain is a regulatory subunit. The polypeptide is ATP synthase subunit alpha (Mesomycoplasma hyopneumoniae (strain J / ATCC 25934 / NCTC 10110) (Mycoplasma hyopneumoniae)).